The following is an 80-amino-acid chain: MSFEVLEQLESKIQTAVDTITLLQMEVEELKEDKVKLETEANELRSQREELEQKSQQAQQEHAQWQERIRALLGKMDEVE.

The stretch at 3–80 (FEVLEQLESK…ALLGKMDEVE (78 aa)) forms a coiled coil. Positions 41 to 53 (ANELRSQREELEQ) are enriched in basic and acidic residues. The disordered stretch occupies residues 41-60 (ANELRSQREELEQKSQQAQQ).

It belongs to the ZapB family. Homodimer. The ends of the coiled-coil dimer bind to each other, forming polymers. Interacts with FtsZ.

Its subcellular location is the cytoplasm. Its function is as follows. Non-essential, abundant cell division factor that is required for proper Z-ring formation. It is recruited early to the divisome by direct interaction with FtsZ, stimulating Z-ring assembly and thereby promoting cell division earlier in the cell cycle. Its recruitment to the Z-ring requires functional FtsA or ZipA. In Vibrio campbellii (strain ATCC BAA-1116), this protein is Cell division protein ZapB.